The chain runs to 834 residues: ATP-dependent DNA helicase fml1 (834 aa).

Residues 80–248 enclose the Helicase ATP-binding domain; the sequence is IVQKALFENV…NVIDSLHISR (169 aa). 93 to 100 serves as a coordination point for ATP; the sequence is LPTGLGKT. A DEAH box motif is present at residues 196-199; the sequence is DEAH. In terms of domain architecture, Helicase C-terminal spans 416-582; sequence HLERIVTEYF…GLSLSEKSYR (167 aa). The interval 650-690 is interaction with MHF complex; that stretch reads EESPFEICPVTYSIEQEKKLEKYKRVCLRGLDIHRNRRLSQ. Positions 738-769 are disordered; sequence NSTDRDTKQPKMHDFRQPLHPNPMTTLKRKGQ. Basic and acidic residues predominate over residues 740 to 754; the sequence is TDRDTKQPKMHDFRQ.

It belongs to the DEAD box helicase family. DEAH subfamily. FANCM sub-subfamily.

The protein resides in the cytoplasm. It is found in the nucleus. Its subcellular location is the nucleolus. It catalyses the reaction ATP + H2O = ADP + phosphate + H(+). Its function is as follows. ATP-dependent DNA helicase involved in DNA damage repair by homologous recombination and in genome maintenance. Capable of unwinding D-loops. Plays a role in limiting crossover recombination during mitotic DNA double-strand break (DSB) repair. Component of a FANCM-MHF complex which promotes gene conversion at blocked replication forks, probably by reversal of the stalled fork. FANCM-MHF also promotes non-crossover recombination in meiotic cells. The sequence is that of ATP-dependent DNA helicase fml1 from Schizosaccharomyces pombe (strain 972 / ATCC 24843) (Fission yeast).